Reading from the N-terminus, the 188-residue chain is Heterodisulfide reductase subunit C-like protein (188 aa).

4Fe-4S ferredoxin-type domains follow at residues Lys34–Tyr64 and Asp78–Met109. Residues Cys44, Cys47, Cys50, Cys54, Cys89, Cys92, Cys95, and Cys99 each coordinate [4Fe-4S] cluster.

It belongs to the HdrC family. As to quaternary structure, the heterodisulfide reductase is composed of three subunits; HdlA, HdlB and HdlC. It forms a complex with the F420-non-reducing hydrogenase (Mvh), which provides the reducing equivalents to the heterodisulfide reductase.

It localises to the cytoplasm. Its function is as follows. Has oxidoreductase activity. The Hdl and Mvh subunits may together mediate electron transfer from hydrogen to an unidentified electron acceptor on the cytoplasmic side of the membrane. This Archaeoglobus profundus (strain DSM 5631 / JCM 9629 / NBRC 100127 / Av18) protein is Heterodisulfide reductase subunit C-like protein (hdlC).